Consider the following 407-residue polypeptide: Proline-rich P65 protein (407 aa).

A disordered region spans residues 1–50 (MDINKPGWNQSDQQATAYDPNQQQYYGDGSTYYDPDQAVDPNQAYYPDPN). The span at 7-25 (GWNQSDQQATAYDPNQQQY) shows a compositional bias: polar residues. 12 consecutive repeat copies span residues 40 to 45 (DPNQAY), 75 to 80 (DPNQAY), 83 to 87 (DPNAY), 89 to 93 (DPNAY), 95 to 99 (DPNAY), 101 to 105 (DPNAY), 107 to 111 (DPNAY), 119 to 123 (DPNAY), 140 to 145 (DPNQAY), 150 to 154 (DPNAY), 156 to 160 (DPNAY), and 170 to 174 (DHNAY). The segment at 40–174 (DPNQAYYPDP…YVTSTDHNAY (135 aa)) is 12 X 5 AA repeats of D-P-N-Q-A-Y.

The N-terminus is blocked.

It is found in the cell membrane. The sequence is that of Proline-rich P65 protein (p65) from Mycoplasmoides pneumoniae (strain ATCC 15531 / DSM 23978 / CIP 103766 / NBRC 14401 / NCTC 10119 / FH) (Mycoplasma pneumoniae).